The following is a 101-amino-acid chain: Small ribosomal subunit protein uS14 (101 aa).

This sequence belongs to the universal ribosomal protein uS14 family. Part of the 30S ribosomal subunit. Contacts proteins S3 and S10.

Its function is as follows. Binds 16S rRNA, required for the assembly of 30S particles and may also be responsible for determining the conformation of the 16S rRNA at the A site. The chain is Small ribosomal subunit protein uS14 from Methylorubrum populi (strain ATCC BAA-705 / NCIMB 13946 / BJ001) (Methylobacterium populi).